Here is a 483-residue protein sequence, read N- to C-terminus: Aspartyl/glutamyl-tRNA(Asn/Gln) amidotransferase subunit B (483 aa).

It belongs to the GatB/GatE family. GatB subfamily. As to quaternary structure, heterotrimer of A, B and C subunits.

The catalysed reaction is L-glutamyl-tRNA(Gln) + L-glutamine + ATP + H2O = L-glutaminyl-tRNA(Gln) + L-glutamate + ADP + phosphate + H(+). It catalyses the reaction L-aspartyl-tRNA(Asn) + L-glutamine + ATP + H2O = L-asparaginyl-tRNA(Asn) + L-glutamate + ADP + phosphate + 2 H(+). Functionally, allows the formation of correctly charged Asn-tRNA(Asn) or Gln-tRNA(Gln) through the transamidation of misacylated Asp-tRNA(Asn) or Glu-tRNA(Gln) in organisms which lack either or both of asparaginyl-tRNA or glutaminyl-tRNA synthetases. The reaction takes place in the presence of glutamine and ATP through an activated phospho-Asp-tRNA(Asn) or phospho-Glu-tRNA(Gln). The polypeptide is Aspartyl/glutamyl-tRNA(Asn/Gln) amidotransferase subunit B (Anaplasma phagocytophilum (strain HZ)).